The chain runs to 1515 residues: Adhesion G protein-coupled receptor L1 (1515 aa).

Positions 1 to 24 are cleaved as a signal peptide; sequence MARLAAALWSLCVTTVLVTSATQG. Residues 25-857 are Extracellular-facing; that stretch reads LSRAGLPFGL…EIYQGRINEL (833 aa). The 90-residue stretch at 40 to 129 folds into the SUEL-type lectin domain; sequence ACEGYPIELR…KYLEVQYDCV (90 aa). 5 disulfide bridges follow: cysteine 41/cysteine 71, cysteine 50/cysteine 128, cysteine 83/cysteine 115, cysteine 96/cysteine 102, and cysteine 140/cysteine 322. Residue glutamate 42 participates in alpha-L-rhamnose binding. Asparagine 98 carries N-linked (GlcNAc...) asparagine glycosylation. An alpha-L-rhamnose-binding site is contributed by 117 to 120; that stretch reads GTYK. Residues 139–398 form the Olfactomedin-like domain; that stretch reads VCPGTLQKVL…VVRYSLEFGP (260 aa). The segment at 400 to 468 is disordered; it reads DPSAGPATSP…APAPSTRRPP (69 aa). Low complexity predominate over residues 405-441; that stretch reads PATSPPLSTTTTARPTPLTSTASPAATTPLRRAPLTT. Pro residues predominate over residues 453-468; the sequence is DLPPATAPAPSTRRPP. 2 disulfides stabilise this stretch: cysteine 480–cysteine 515 and cysteine 503–cysteine 532. 6 N-linked (GlcNAc...) asparagine glycosylation sites follow: asparagine 531, asparagine 640, asparagine 741, asparagine 800, asparagine 805, and asparagine 826. Positions 669–850 constitute a GAIN-B domain; the sequence is PARFLAAKQN…AVLMAHREIY (182 aa). 2 disulfides stabilise this stretch: cysteine 801–cysteine 832 and cysteine 820–cysteine 834. Residues 801–850 form a GPS region; that stretch reads CSFWNYSERSMLGYWSTQGCRLVESNKTHTTCACSHLTNFAVLMAHREIY. A helical membrane pass occupies residues 858 to 878; it reads LLSVITWVGIVISLVCLAICI. The Cytoplasmic portion of the chain corresponds to 879 to 892; the sequence is STFCFLRGLQTDRN. A helical transmembrane segment spans residues 893-913; sequence TIHKNLCINLFLAELLFLVGI. Residues 914–919 lie on the Extracellular side of the membrane; the sequence is DKTQYE. Residues 920–940 form a helical membrane-spanning segment; sequence VACPIFAGLLHYFFLAAFSWL. At 941–964 the chain is on the cytoplasmic side; that stretch reads CLEGVHLYLLLVEVFESEYSRTKY. The helical transmembrane segment at 965–985 threads the bilayer; sequence YYLGGYCFPALVVGIAAAIDY. The Extracellular portion of the chain corresponds to 986-1001; that stretch reads RSYGTEKACWLRVDNY. Residues 1002–1022 traverse the membrane as a helical segment; sequence FIWSFIGPVSFVIVVNLVFLM. Residues 1023–1049 lie on the Cytoplasmic side of the membrane; it reads VTLHKMIRSSSVLKPDSSRLDNIKSWA. Residues 1050–1070 form a helical membrane-spanning segment; the sequence is LGAIALLFLLGLTWAFGLLFI. The Extracellular portion of the chain corresponds to 1071–1074; that stretch reads NKES. The helical transmembrane segment at 1075-1095 threads the bilayer; that stretch reads VVMAYLFTTFNAFQGVFIFVF. The Cytoplasmic portion of the chain corresponds to 1096-1515; that stretch reads HCALQKKVHK…DGQMQLVTSL (420 aa). Positions 1144–1184 are disordered; that stretch reads TQVPGQGRHIHQVSLGPRGRSALPESQKDPGGQSGPGDPLT. Omega-N-methylarginine is present on arginine 1237. Serine 1263 bears the Phosphoserine mark. 4 disordered regions span residues 1291-1316, 1337-1369, 1401-1470, and 1492-1515; these read FNNS…RGRN, RGAS…PGGA, ESES…SRPP, and YLAA…VTSL. Composition is skewed to pro residues over residues 1345–1356 and 1449–1461; these read GPPPEPPVPPVP and ALPP…PGPP. Phosphoserine occurs at positions 1497 and 1514.

The protein belongs to the G-protein coupled receptor 2 family. Adhesion G-protein coupled receptor (ADGR) subfamily. As to quaternary structure, forms a heterodimer, consisting of a large extracellular region (p120) non-covalently linked to a seven-transmembrane moiety (p85). Interacts with syntaxin and with proteins of the SHANK family via the PDZ domain. Isoform 2 interacts with TENM2. Interacts (via extracellular domain) with FLRT1, FLRT2 and FLRT3 (via extracellular domain). In terms of processing, autoproteolytically cleaved into 2 subunits, an extracellular subunit and a seven-transmembrane subunit. This proteolytic processing takes place early in the biosynthetic pathway, either in the endoplasmic reticulum or in the early compartment of the Golgi apparatus. As to expression, expressed in the brain (at protein level). Brain specific distribution but low levels are also detected in most tissues.

The protein resides in the cell membrane. It is found in the cell projection. Its subcellular location is the axon. The protein localises to the growth cone. It localises to the synapse. The protein resides in the presynaptic cell membrane. It is found in the synaptosome. In terms of biological role, calcium-independent receptor of high affinity for alpha-latrotoxin, an excitatory neurotoxin present in black widow spider venom which triggers massive exocytosis from neurons and neuroendocrine cells. Receptor probably implicated in the regulation of exocytosis. Receptor for TENM2 that mediates heterophilic synaptic cell-cell contact and postsynaptic specialization. The sequence is that of Adhesion G protein-coupled receptor L1 from Rattus norvegicus (Rat).